We begin with the raw amino-acid sequence, 405 residues long: Probable glucan 1,3-beta-glucosidase A (405 aa).

The N-terminal stretch at 1 to 26 (MFPRISQAAILAHSLLAVCTSAATLA) is a signal peptide. Catalysis depends on Glu-198, which acts as the Proton donor. 2 cysteine pairs are disulfide-bonded: Cys-278-Cys-403 and Cys-304-Cys-330. Glu-296 functions as the Nucleophile in the catalytic mechanism.

This sequence belongs to the glycosyl hydrolase 5 (cellulase A) family. Monomer. It depends on Mn(2+) as a cofactor.

It is found in the secreted. The enzyme catalyses Successive hydrolysis of beta-D-glucose units from the non-reducing ends of (1-&gt;3)-beta-D-glucans, releasing alpha-glucose.. Its function is as follows. Beta-glucanases participate in the metabolism of beta-glucan, the main structural component of the cell wall. It could also function biosynthetically as a transglycosylase. This is Probable glucan 1,3-beta-glucosidase A (exgA) from Emericella nidulans (strain FGSC A4 / ATCC 38163 / CBS 112.46 / NRRL 194 / M139) (Aspergillus nidulans).